A 368-amino-acid chain; its full sequence is tRNA(Met) cytidine acetate ligase (368 aa).

ATP contacts are provided by residues 7–20 (IAEF…HKYL), Gly96, Asn152, and Arg175.

Belongs to the TmcAL family.

It localises to the cytoplasm. It catalyses the reaction cytidine(34) in elongator tRNA(Met) + acetate + ATP = N(4)-acetylcytidine(34) in elongator tRNA(Met) + AMP + diphosphate. Its function is as follows. Catalyzes the formation of N(4)-acetylcytidine (ac(4)C) at the wobble position of elongator tRNA(Met), using acetate and ATP as substrates. First activates an acetate ion to form acetyladenylate (Ac-AMP) and then transfers the acetyl group to tRNA to form ac(4)C34. This is tRNA(Met) cytidine acetate ligase from Streptococcus pyogenes serotype M1.